We begin with the raw amino-acid sequence, 148 residues long: NADPH-dependent 7-cyano-7-deazaguanine reductase (148 aa).

Residue Cys-50 is the Thioimide intermediate of the active site. Asp-57 (proton donor) is an active-site residue. Substrate contacts are provided by residues 72-74 and 91-92; these read VES and HE.

Belongs to the GTP cyclohydrolase I family. QueF type 1 subfamily.

Its subcellular location is the cytoplasm. It catalyses the reaction 7-aminomethyl-7-carbaguanine + 2 NADP(+) = 7-cyano-7-deazaguanine + 2 NADPH + 3 H(+). It functions in the pathway tRNA modification; tRNA-queuosine biosynthesis. Functionally, catalyzes the NADPH-dependent reduction of 7-cyano-7-deazaguanine (preQ0) to 7-aminomethyl-7-deazaguanine (preQ1). The protein is NADPH-dependent 7-cyano-7-deazaguanine reductase of Helicobacter pylori (strain HPAG1).